The following is a 196-amino-acid chain: Protein/nucleic acid deglycase 3 (196 aa).

The active-site Nucleophile is cysteine 106. Position 106 is a cysteine sulfinic acid (-SO2H); alternate (cysteine 106).

This sequence belongs to the peptidase C56 family. As to quaternary structure, homodimer. Cys-106 is easily oxidized to sulfinic acid.

The catalysed reaction is N(omega)-(1-hydroxy-2-oxopropyl)-L-arginyl-[protein] + H2O = lactate + L-arginyl-[protein] + H(+). It catalyses the reaction N(6)-(1-hydroxy-2-oxopropyl)-L-lysyl-[protein] + H2O = lactate + L-lysyl-[protein] + H(+). The enzyme catalyses S-(1-hydroxy-2-oxopropyl)-L-cysteinyl-[protein] + H2O = lactate + L-cysteinyl-[protein] + H(+). It carries out the reaction N(omega)-(1-hydroxy-2-oxoethyl)-L-arginyl-[protein] + H2O = L-arginyl-[protein] + glycolate + H(+). The catalysed reaction is N(6)-(1-hydroxy-2-oxoethyl)-L-lysyl-[protein] + H2O = glycolate + L-lysyl-[protein] + H(+). It catalyses the reaction S-(1-hydroxy-2-oxoethyl)-L-cysteinyl-[protein] + H2O = glycolate + L-cysteinyl-[protein] + H(+). The enzyme catalyses N(2)-(1-hydroxy-2-oxopropyl)-dGTP + H2O = lactate + dGTP + H(+). It carries out the reaction N(2)-(1-hydroxy-2-oxopropyl)-GTP + H2O = lactate + GTP + H(+). The catalysed reaction is N(2)-(1-hydroxy-2-oxopropyl)-GDP + H2O = lactate + GDP + H(+). It catalyses the reaction N(2)-(1-hydroxy-2-oxopropyl)-GMP + H2O = lactate + GMP + H(+). The enzyme catalyses N(2)-(1-hydroxy-2-oxoethyl)-dGTP + H2O = dGTP + glycolate + H(+). It carries out the reaction N(2)-(1-hydroxy-2-oxoethyl)-GTP + H2O = glycolate + GTP + H(+). The catalysed reaction is N(2)-(1-hydroxy-2-oxoethyl)-GDP + H2O = glycolate + GDP + H(+). It catalyses the reaction N(2)-(1-hydroxy-2-oxoethyl)-GMP + H2O = glycolate + GMP + H(+). The enzyme catalyses an N(2)-(1-hydroxy-2-oxopropyl)-guanosine in RNA + H2O = a guanosine in RNA + lactate + H(+). It carries out the reaction an N(2)-(1-hydroxy-2-oxopropyl)-2'-deoxyguanosine in DNA + H2O = a 2'-deoxyguanosine in DNA + lactate + H(+). The catalysed reaction is an N(2)-(1-hydroxy-2-oxoethyl)-guanosine in RNA + H2O = a guanosine in RNA + glycolate + H(+). It catalyses the reaction an N(2)-(1-hydroxy-2-oxoethyl)-2'-deoxyguanosine in DNA + H2O = a 2'-deoxyguanosine in DNA + glycolate + H(+). Glyoxalase activity is inhibited by zinc ions. Active as a chaperone in both its reduced and oxidized states, and is more active in its oxidized form. In terms of biological role, protein and nucleotide deglycase that catalyzes the deglycation of the Maillard adducts formed between amino groups of proteins or nucleotides and reactive carbonyl groups of glyoxals. Thus, functions as a protein deglycase that repairs methylglyoxal- and glyoxal-glycated proteins, and releases repaired proteins and lactate or glycolate, respectively. Deglycates cysteine, arginine and lysine residues in proteins, and thus reactivates these proteins by reversing glycation by glyoxals. Is able to repair glycated serum albumin, collagen, glyceraldehyde-3-phosphate dehydrogenase, and fructose biphosphate aldolase. Acts on early glycation intermediates (hemithioacetals and aminocarbinols), preventing the formation of Schiff bases and advanced glycation endproducts (AGE) that cause irreversible damage. Also functions as a nucleotide deglycase able to repair glycated guanine in the free nucleotide pool (GTP, GDP, GMP, dGTP) and in DNA and RNA. Is thus involved in a major nucleotide repair system named guanine glycation repair (GG repair), dedicated to reversing methylglyoxal and glyoxal damage via nucleotide sanitization and direct nucleic acid repair. However, is less efficient than Hsp31 and YhbO, suggesting that YajL might be preferentially dedicated to protein repair. Displays a covalent chaperone activity with sulfenylated thiol proteins by forming mixed disulfides with members of the thiol proteome, and preferentially with sulfenylated cellular proteins, upon oxidative stress; these mixed disulfides can be subsequently reduced by low-molecular-weight thiols to regenerate YajL and reduced proteins. Involved in biogenesis of ribosomal proteins, probably as a ribosomal protein-folding chaperone. Confers resistance to oxidative stress. Plays an important role in protection against electrophile/carbonyl stress. The chaperone activity reported for YajL is probably recruited to execute its deglycase activity, to interact with non-native glycated proteins and gain access to partially buried glycated sites. Also displays an apparent glyoxalase activity that in fact reflects its deglycase activity. This is Protein/nucleic acid deglycase 3 (yajL) from Escherichia coli (strain K12).